Reading from the N-terminus, the 478-residue chain is tRNA modification GTPase MnmE (478 aa).

Residues Arg-25, Glu-82, and Lys-135 each contribute to the (6S)-5-formyl-5,6,7,8-tetrahydrofolate site. In terms of domain architecture, TrmE-type G spans 231 to 400 (GIKVVIAGQP…LRQRLLQVVG (170 aa)). Asn-241 serves as a coordination point for K(+). Residues 241–246 (NAGKSS), 260–266 (TPIAGTT), and 285–288 (DTAG) contribute to the GTP site. Ser-245 is a binding site for Mg(2+). The K(+) site is built by Thr-260, Ile-262, and Thr-265. Thr-266 provides a ligand contact to Mg(2+). A (6S)-5-formyl-5,6,7,8-tetrahydrofolate-binding site is contributed by Lys-478.

This sequence belongs to the TRAFAC class TrmE-Era-EngA-EngB-Septin-like GTPase superfamily. TrmE GTPase family. As to quaternary structure, homodimer. Heterotetramer of two MnmE and two MnmG subunits. K(+) is required as a cofactor.

The protein localises to the cytoplasm. In terms of biological role, exhibits a very high intrinsic GTPase hydrolysis rate. Involved in the addition of a carboxymethylaminomethyl (cmnm) group at the wobble position (U34) of certain tRNAs, forming tRNA-cmnm(5)s(2)U34. The chain is tRNA modification GTPase MnmE from Polaromonas sp. (strain JS666 / ATCC BAA-500).